We begin with the raw amino-acid sequence, 130 residues long: Glycine cleavage system H protein (130 aa).

The region spanning 25–106 (MALIGISDFA…PFDSWMIKVK (82 aa)) is the Lipoyl-binding domain. Lys-66 is modified (N6-lipoyllysine).

This sequence belongs to the GcvH family. In terms of assembly, the glycine cleavage system is composed of four proteins: P, T, L and H. (R)-lipoate is required as a cofactor.

Its function is as follows. The glycine cleavage system catalyzes the degradation of glycine. The H protein shuttles the methylamine group of glycine from the P protein to the T protein. In Leptospira interrogans serogroup Icterohaemorrhagiae serovar copenhageni (strain Fiocruz L1-130), this protein is Glycine cleavage system H protein.